The primary structure comprises 407 residues: Peptidase T (407 aa).

H77 lines the Zn(2+) pocket. D79 is a catalytic residue. Residue D138 coordinates Zn(2+). The active-site Proton acceptor is E172. Residues E173, D195, and H377 each contribute to the Zn(2+) site.

Belongs to the peptidase M20B family. It depends on Zn(2+) as a cofactor.

It localises to the cytoplasm. The enzyme catalyses Release of the N-terminal residue from a tripeptide.. In terms of biological role, cleaves the N-terminal amino acid of tripeptides. This Aeromonas salmonicida (strain A449) protein is Peptidase T.